Reading from the N-terminus, the 312-residue chain is Tumor necrosis factor receptor type 1-associated DEATH domain protein (312 aa).

Residues 147–163 (LRDEELAELEDALRNLK) carry the Nuclear export signal motif. Positions 170–195 (GGDGEVASAPLQPPVPSLSEVKPPPP) are disordered. The region spanning 179–289 (PLQPPVPSLS…ATLQRLVEAL (111 aa)) is the Death domain. The segment covering 180–195 (LQPPVPSLSEVKPPPP) has biased composition (pro residues). The interaction with KRT14 and KRT18 stretch occupies residues 222–289 (FARSVGLKWR…ATLQRLVEAL (68 aa)). The Nuclear localization signal signature appears at 231–244 (RKVGRSLQRGCRAL). Residues R235 and R245 are each glycosylated ((Microbial infection) N-beta-linked (GlcNAc) arginine).

In terms of assembly, stimulation of TNF-alpha receptor TNFRSF1A leads to the formation of two distinct signaling complexes. Plasma membrane-bound complex I is composed of TNFRSF1A, TRADD, RIPK1, TRAF2 and BIRC2/c-IAP1 or BIRC3 which interacts with CHUCK/IKK-alpha, IKBKB/IKK-beta and IKBKG/IKK-gamma promoting cell survival. Subsequently, TRADD, RIPK1 and TRAF2 dissociate from TNFRSF1A and form cytoplasmic complex II with FADD and caspase CASP8 promoting cell apoptosis. Within complex I, interacts with TNFRSF1A/TNFR1, TRAF2 and kinase RIPK1. Within complex I, interacts with TRPC4AP; the interaction promotes NF-kappa B activation. UXT1 associates with complex I; the interaction prevents the formation of complex II. Within complex I Interacts with scaffold protein DAB2IP. Interacts with autophagy receptor SQSTM1. Interacts with E3 ligase TRIP12. Interacts with kinase HIPK2. Interacts with keratin KRT14. Interacts with keratin KRT18. Interacts with keratins KRT16 and KRT17. Interacts with FADD. Interacts with TOMM70. Interacts with TMC8; the interaction impairs the formation of complex I and facilites complex II formation. (Microbial infection) Glycosylated at Arg-235 by enteropathogenic E.coli protein NleB1, C.rodentium protein NleB and S.typhimurium proteins Ssek1 and Ssek3: arginine GlcNAcylation prevents homotypic/heterotypic death domain interactions and assembly of the oligomeric TNFRSF1A/TNFR1 complex, thereby disrupting TNF signaling. As to expression, found in all examined tissues.

Its subcellular location is the nucleus. The protein localises to the cytoplasm. The protein resides in the cytoskeleton. In terms of biological role, adapter molecule for TNFRSF1A/TNFR1 that specifically associates with the cytoplasmic domain of activated TNFRSF1A/TNFR1 mediating its interaction with FADD. Overexpression of TRADD leads to two major TNF-induced responses, apoptosis and activation of NF-kappa-B. The nuclear form acts as a tumor suppressor by preventing ubiquitination and degradation of isoform p19ARF/ARF of CDKN2A by TRIP12: acts by interacting with TRIP12, leading to disrupt interaction between TRIP12 and isoform p19ARF/ARF of CDKN2A. The chain is Tumor necrosis factor receptor type 1-associated DEATH domain protein from Homo sapiens (Human).